We begin with the raw amino-acid sequence, 338 residues long: Glycerol-3-phosphate dehydrogenase [NAD(P)+] (338 aa).

Ser-12, Trp-13, and Lys-110 together coordinate NADPH. Sn-glycerol 3-phosphate-binding residues include Lys-110, Gly-141, and Ser-143. Ala-145 provides a ligand contact to NADPH. Positions 196, 249, 259, 260, and 261 each coordinate sn-glycerol 3-phosphate. The active-site Proton acceptor is Lys-196. NADPH is bound at residue Arg-260. Residues Val-284 and Glu-286 each coordinate NADPH.

This sequence belongs to the NAD-dependent glycerol-3-phosphate dehydrogenase family.

The protein localises to the cytoplasm. The enzyme catalyses sn-glycerol 3-phosphate + NAD(+) = dihydroxyacetone phosphate + NADH + H(+). The catalysed reaction is sn-glycerol 3-phosphate + NADP(+) = dihydroxyacetone phosphate + NADPH + H(+). It functions in the pathway membrane lipid metabolism; glycerophospholipid metabolism. Catalyzes the reduction of the glycolytic intermediate dihydroxyacetone phosphate (DHAP) to sn-glycerol 3-phosphate (G3P), the key precursor for phospholipid synthesis. This Lactiplantibacillus plantarum (strain ATCC BAA-793 / NCIMB 8826 / WCFS1) (Lactobacillus plantarum) protein is Glycerol-3-phosphate dehydrogenase [NAD(P)+].